Consider the following 162-residue polypeptide: 2-C-methyl-D-erythritol 2,4-cyclodiphosphate synthase (162 aa).

A divalent metal cation contacts are provided by Asp12 and His14. 4-CDP-2-C-methyl-D-erythritol 2-phosphate is bound by residues 12–14 (DVH) and 38–39 (HS). Residue His46 coordinates a divalent metal cation. Residues 60-62 (DIG), 136-139 (TTTE), Phe143, and Arg146 each bind 4-CDP-2-C-methyl-D-erythritol 2-phosphate.

The protein belongs to the IspF family. Homotrimer. A divalent metal cation is required as a cofactor.

The catalysed reaction is 4-CDP-2-C-methyl-D-erythritol 2-phosphate = 2-C-methyl-D-erythritol 2,4-cyclic diphosphate + CMP. It participates in isoprenoid biosynthesis; isopentenyl diphosphate biosynthesis via DXP pathway; isopentenyl diphosphate from 1-deoxy-D-xylulose 5-phosphate: step 4/6. Functionally, involved in the biosynthesis of isopentenyl diphosphate (IPP) and dimethylallyl diphosphate (DMAPP), two major building blocks of isoprenoid compounds. Catalyzes the conversion of 4-diphosphocytidyl-2-C-methyl-D-erythritol 2-phosphate (CDP-ME2P) to 2-C-methyl-D-erythritol 2,4-cyclodiphosphate (ME-CPP) with a corresponding release of cytidine 5-monophosphate (CMP). In Porphyromonas gingivalis (strain ATCC BAA-308 / W83), this protein is 2-C-methyl-D-erythritol 2,4-cyclodiphosphate synthase.